The following is an 84-amino-acid chain: Small ribosomal subunit protein eS27z (84 aa).

The segment at 39–61 adopts a C4-type zinc-finger fold; the sequence is CQGCFNITTVFSHSQTVVMCGNC.

It belongs to the eukaryotic ribosomal protein eS27 family. (Microbial infection) May interact with Tomato yellow leaf curl virus (TYLCV) and papaya leaf curl China virus (PaLcuCNV) C2 proteins. This interaction prevents activation of Jasmonate signaling, thereby facilitating viral uptake by insects vectors. Requires Zn(2+) as cofactor.

This is Small ribosomal subunit protein eS27z (RPS27A) from Arabidopsis thaliana (Mouse-ear cress).